We begin with the raw amino-acid sequence, 1032 residues long: Protein phosphatase 1 regulatory subunit 12A (1032 aa).

The short motif at 35–38 is the KVKF motif element; it reads KVKF. ANK repeat units follow at residues 39–68, 72–101, 105–134, 138–164, 198–227, and 231–260; these read DDGA…DINY, DGLT…NINQ, EGWI…HVGA, EGDT…RQGV, SGGT…DVNI, and DGWT…DMET. Asparagine 67 and asparagine 100 each carry (3S)-3-hydroxyasparagine; by HIF1AN. Residue asparagine 226 is modified to (3S)-3-hydroxyasparagine; by HIF1AN. 2 disordered regions span residues 290–553 and 588–928; these read LHSE…HRSC and SSTS…RLEK. Residues 291-300 show a composition bias toward basic and acidic residues; the sequence is HSEKRDKKSP. Serine 299 bears the Phosphoserine mark. The span at 302 to 316 shows a compositional bias: polar residues; sequence IESTANMENNQPQKT. A compositionally biased stretch (basic and acidic residues) spans 318–340; it reads KNKETLIIEPEKNASRIESLEQE. A compositionally biased stretch (acidic residues) spans 357-369; sequence SEEDEEDDSESEA. Low complexity predominate over residues 383-399; that stretch reads AHTASTQAAPAAVTTPT. Residues 400–421 are compositionally biased toward polar residues; that stretch reads LSSNQGTPTSPVKKFPTSTTKI. Serine 422 and serine 432 each carry phosphoserine. Positions 422 to 432 are enriched in basic and acidic residues; sequence SPKEEERKDES. Phosphothreonine is present on threonine 443. A Phosphoserine modification is found at serine 445. Tyrosine 446 carries the post-translational modification Phosphotyrosine. Positions 469–480 are enriched in low complexity; that stretch reads RSASSPRLSSSL. Serine 472 carries the phosphoserine; by NUAK1 modification. Serine 473 carries the phosphoserine; by CDK1 modification. The residue at position 477 (serine 477) is a Phosphoserine. Residues 481–491 are compositionally biased toward basic and acidic residues; that stretch reads DNKEKEKDNKG. A phosphoserine mark is found at serine 507 and serine 509. Residues 540–551 show a composition bias toward polar residues; sequence NSSINEGSTYHR. The residue at position 601 (serine 601) is a Phosphoserine. The segment covering 602 to 612 has biased composition (polar residues); that stretch reads PAGTQSSTSNR. The segment covering 614–625 has biased composition (basic and acidic residues); sequence WAEDSTEKEKDS. A Phosphoserine modification is found at serine 618. The span at 633–661 shows a compositional bias: low complexity; it reads LVAPTVVSAAASSTTALTTTTAGTLSSTS. The span at 674-683 shows a compositional bias: basic and acidic residues; sequence VRDEESESQR. The tract at residues 683 to 866 is interaction with ROCK2; sequence RKARSRQARQ…VSFWTQDSDE (184 aa). A compositionally biased stretch (basic residues) spans 684–694; the sequence is KARSRQARQSR. 2 positions are modified to phosphoserine; by PKA and PKG; in vitro: serine 693 and serine 696. Residue threonine 697 is modified to Phosphothreonine; by ROCK1, ROCK2, CDC42BP, ZIPK/DAPK3 and RAF1. Residues 719–768 are compositionally biased toward basic and acidic residues; it reads RTREQENEEKDKEEKEKQDKEKQEEKKESEVSREDEYKQKYSRTYDETYA. Residues 774–797 are compositionally biased toward low complexity; the sequence is STSSSSTPSSSSLSTLGSSLYASS. The span at 798–812 shows a compositional bias: polar residues; the sequence is QLNRPNSLVGITSAY. Position 804 is a phosphoserine (serine 804). Residues 816 to 842 show a composition bias toward basic and acidic residues; sequence LTKDNEREGEKKEEEKEGEDKSQPKSI. The span at 843 to 854 shows a compositional bias: basic residues; sequence RERRRPREKRRS. Serine 854 carries the post-translational modification Phosphoserine; by ROCK2. Phosphoserine is present on residues serine 864 and serine 873. Residues 869–885 show a composition bias toward basic and acidic residues; it reads QERQSDTEDGSSKRDTQ. The span at 886–900 shows a compositional bias: low complexity; the sequence is TDSVSRYDSSSTSSS. Phosphoserine is present on residues serine 905 and serine 910. Serine 912 bears the Phosphoserine; by NUAK1 mark. A compositionally biased stretch (basic and acidic residues) spans 916 to 928; it reads LEERKPYGSRLEK. Serine 997 carries the phosphoserine modification.

PP1 comprises a catalytic subunit, PPP1CA, PPP1CB or PPP1CC, and one or several targeting or regulatory subunits. PPP1R12A mediates binding to myosin. Interacts with ARHA and CIT. Binds PPP1R12B, ROCK1 and IL16. Interacts directly with PRKG1. Non-covalent dimer of 2 dimers; PRKG1-PRKG1 and PPP1R12A-PPP1R12A. Interacts with SMTNL1. Interacts with PPP1CB; the interaction is direct. Interacts (when phosphorylated at Ser-445, Ser-472 and Ser-910) with 14-3-3. Interacts with ROCK1 and ROCK2. Interacts with isoform 1 and isoform 2 of ZIPK/DAPK3. Interacts with RAF1. Interacts with HIF1AN. Interacts with NCKAP1L. Post-translationally, phosphorylated on upon DNA damage, probably by ATM or ATR. Phosphorylated by CIT (Rho-associated kinase). Phosphorylated cooperatively by ROCK1 and CDC42BP on Thr-697. In vitro, phosphorylation of Ser-696 by PKA and PKG appears to prevent phosphorylation of the inhibitory site Thr-697, probably mediated by PRKG1. May be phosphorylated at Thr-697 by DMPK; may inhibit the myosin phosphatase activity. Phosphorylated at Ser-473 by CDK1 during mitosis, creating docking sites for the POLO box domains of PLK1. Subsequently, PLK1 binds and phosphorylates PPP1R12A. Smooth muscle. Detected in aorta, portal vein, stomach, intestine, bladder and lung.

The protein resides in the cytoplasm. It is found in the cytoskeleton. Its subcellular location is the stress fiber. Functionally, key regulator of protein phosphatase 1C (PPP1C). Mediates binding to myosin. As part of the PPP1C complex, involved in dephosphorylation of PLK1. Capable of inhibiting HIF1AN-dependent suppression of HIF1A activity. The sequence is that of Protein phosphatase 1 regulatory subunit 12A from Rattus norvegicus (Rat).